The primary structure comprises 394 residues: Elongation factor Tu (394 aa).

Residues 10 to 205 (KPHMNVGTIG…SMDNYFDLPE (196 aa)) form the tr-type G domain. Positions 19 to 26 (GHVDHGKT) are G1. 19 to 26 (GHVDHGKT) contacts GTP. Thr-26 is a Mg(2+) binding site. The tract at residues 61–65 (GITIN) is G2. A G3 region spans residues 82–85 (DCPG). Residues 82–86 (DCPGH) and 137–140 (NKLD) each bind GTP. Residues 137–140 (NKLD) are G4. The interval 173–175 (SAF) is G5.

Belongs to the TRAFAC class translation factor GTPase superfamily. Classic translation factor GTPase family. EF-Tu/EF-1A subfamily. In terms of assembly, monomer.

Its subcellular location is the cytoplasm. The catalysed reaction is GTP + H2O = GDP + phosphate + H(+). In terms of biological role, GTP hydrolase that promotes the GTP-dependent binding of aminoacyl-tRNA to the A-site of ribosomes during protein biosynthesis. In Borreliella burgdorferi (strain ATCC 35210 / DSM 4680 / CIP 102532 / B31) (Borrelia burgdorferi), this protein is Elongation factor Tu.